Here is a 571-residue protein sequence, read N- to C-terminus: UvrABC system protein C (571 aa).

The region spanning 15–93 is the GIY-YIG domain; the sequence is TSPGVYLWKD…VDRFNPEFNI (79 aa). Residues 184 to 219 enclose the UVR domain; it reads NNYLNELTNKMHTAANNMQFELALFLRDGLTYLKKL.

The protein belongs to the UvrC family. Interacts with UvrB in an incision complex.

Its subcellular location is the cytoplasm. In terms of biological role, the UvrABC repair system catalyzes the recognition and processing of DNA lesions. UvrC both incises the 5' and 3' sides of the lesion. The N-terminal half is responsible for the 3' incision and the C-terminal half is responsible for the 5' incision. This Mycoplasmopsis agalactiae (strain NCTC 10123 / CIP 59.7 / PG2) (Mycoplasma agalactiae) protein is UvrABC system protein C.